Here is a 308-residue protein sequence, read N- to C-terminus: Zinc finger CCCH domain-containing protein 15 (308 aa).

The disordered stretch occupies residues 1–21; that stretch reads MENKIAPFSYSGSSAGNSSSG. Positions 9–21 are enriched in low complexity; sequence SYSGSSAGNSSSG. Positions 56–91 form a coiled coil; sequence TRLHEASLEAEALRLENTELRSMNLRLKNELNSLIR. The disordered stretch occupies residues 110–190; it reads LSIGGNDADE…GTVTKPGTCG (81 aa). A Phosphoserine modification is found at Ser-111. Polar residues predominate over residues 148–164; it reads RSSLPKSISVRSNGYSK. 2 consecutive C3H1-type zinc fingers follow at residues 222 to 250 and 260 to 288; these read MTKTELCNKWQETGTCPYGDHCQFAHGIK and RYKTEVCRMVLAGDNCPYGHRCHFRHSLS.

Phosphorylated at Ser-111 by ASK7/BIN2 in the cytoplasm in the absence of brassinosteroids (BRs). Highly expressed in secondary cell wall-forming tissues and the xylem cells of roots. Expressed predominantly in inflorescence stems, flowers and siliques. Highly expressed in the basal portion of stems, where cells are undergoing secondary cell wall thickening. Highly expressed in meiocytes and tapetum from anthers.

It is found in the cytoplasm. Its subcellular location is the nucleus. In terms of biological role, functions probably as a transcriptional factor that activates genes involved in secondary cell wall biosynthesis. Functions redudantly with C3H14 to regulate secondary cell wall formation. C3H14 and C3H15 have overlapping roles in the regulation of secondary cell wall formation and anther development. C3H14 may contribute more to secondary cell wall thickening while C3H15 could be more important in anther development. May regulate at both the transcriptional and post-transcriptional levels the expression of many genes involved in various biological processes, particularly those associated with cell wall metabolism and pollen development. Involved in the regulation of callose metabolism in male meiocytes, in integrity of newly formed microspores, and promotes male fertility. May be involved in the regulation of the callose synthesis genes CALS5 and CALS12, the potential degradation of callose walls-related genes A6 and MYB80, as well as other putative beta-1,3-glucanase genes. Negatively regulates cell elongation by inhibiting brassinosteroid (BR) signaling. Functions downstream of the BRI1 receptor as a negative regulator in the BR pathway. The chain is Zinc finger CCCH domain-containing protein 15 from Arabidopsis thaliana (Mouse-ear cress).